The sequence spans 151 residues: Large ribosomal subunit protein bL9 (151 aa).

Belongs to the bacterial ribosomal protein bL9 family.

In terms of biological role, binds to the 23S rRNA. This is Large ribosomal subunit protein bL9 from Oenococcus oeni (strain ATCC BAA-331 / PSU-1).